The sequence spans 494 residues: Lysine--tRNA ligase (494 aa).

Mg(2+) is bound by residues Glu407 and Glu414.

Belongs to the class-II aminoacyl-tRNA synthetase family. In terms of assembly, homodimer. Mg(2+) is required as a cofactor.

The protein localises to the cytoplasm. It catalyses the reaction tRNA(Lys) + L-lysine + ATP = L-lysyl-tRNA(Lys) + AMP + diphosphate. This is Lysine--tRNA ligase from Lactococcus lactis subsp. cremoris (strain SK11).